We begin with the raw amino-acid sequence, 285 residues long: CBY1-interacting BAR domain-containing protein 1-B (285 aa).

Residues 1-48 constitute a mitochondrion transit peptide; the sequence is MSQTPEARTRDNQTRQIQESVNNVEKHFGELCQIFAGYVRKTARLRDK. Residues 11 to 221 form a BAR-like region; it reads DNQTRQIQES…DIDEEEDLEV (211 aa). Residues 142–184 adopt a coiled-coil conformation; sequence RQIISQAETELQRATMDAARISQQLEETIDNFEKQKIKDIKKL. Over residues 241–261 the composition is skewed to polar residues; it reads NSRSGSTSRAPSVISQPPGNR. Positions 241-285 are disordered; it reads NSRSGSTSRAPSVISQPPGNRQKNRMEDDEDGEDDNDENSTEDEN. The span at 267–285 shows a compositional bias: acidic residues; the sequence is EDDEDGEDDNDENSTEDEN.

The protein belongs to the CIBAR family.

It is found in the cytoplasm. Its subcellular location is the cytoskeleton. The protein localises to the microtubule organizing center. The protein resides in the centrosome. It localises to the centriole. It is found in the cell projection. Its subcellular location is the cilium. The protein localises to the nucleus. The protein resides in the mitochondrion inner membrane. It localises to the flagellum. Functionally, plays a critical role in regulating mitochondrial ultrastructure and function by maintaining the integrity of mitochondrial morphology, particularly the organization of cristae. Plays a crucial role in ciliogenesis. Plays a key role in the correct positioning of the annulus, a septin-based ring structure in the sperm flagellum, serving both as a physical barrier and a membrane diffusion barrier that separates the midpiece (MP) from the principal piece (PP). The sequence is that of CBY1-interacting BAR domain-containing protein 1-B from Xenopus laevis (African clawed frog).